The following is a 313-amino-acid chain: MNTFSQVWVFSDTPSRLPELMNGAQALANQINTFVLNDADGAQAIQLGANHVWKLSGKPDERMIEDYAGVMADTIRQHGADGLVLLPNTRRGKLLAAKLGYRLNAAVSNDASAVSVQDGKATVKHMVYGGLAIGEERIATPYAVLTISSGTFDVAQPDASRTGETHTVEWQAPAVAITRTATQARQSNSVDLDKARLVVSVGRGIGSKENIALAEQLCKAIGAELACSRPVAENEKWMEHERYVGISNLMLKPELYLAVGISGQIQHMVGANASQTIFAINKDKNAPIFQYADYGIVGDAVKILPALTAALAR.

255-283 (LYLAVGISGQIQHMVGANASQTIFAINKD) serves as a coordination point for FAD.

This sequence belongs to the ETF alpha-subunit/FixB family. In terms of assembly, heterodimer of FixA and FixB.

It functions in the pathway amine and polyamine metabolism; carnitine metabolism. Functionally, required for anaerobic carnitine reduction. May bring reductant to CaiA. This Escherichia coli O81 (strain ED1a) protein is Protein FixB.